We begin with the raw amino-acid sequence, 343 residues long: Ribosomal RNA small subunit methyltransferase C (343 aa).

Belongs to the methyltransferase superfamily. RsmC family. As to quaternary structure, monomer.

It is found in the cytoplasm. The enzyme catalyses guanosine(1207) in 16S rRNA + S-adenosyl-L-methionine = N(2)-methylguanosine(1207) in 16S rRNA + S-adenosyl-L-homocysteine + H(+). Its function is as follows. Specifically methylates the guanine in position 1207 of 16S rRNA in the 30S particle. This is Ribosomal RNA small subunit methyltransferase C from Escherichia coli O6:H1 (strain CFT073 / ATCC 700928 / UPEC).